The sequence spans 452 residues: tRNA modification GTPase MnmE (452 aa).

(6S)-5-formyl-5,6,7,8-tetrahydrofolate is bound by residues Arg21, Glu78, and Lys118. Residues 214 to 375 (GMKVVIAGRP…LREHLKQAMG (162 aa)) enclose the TrmE-type G domain. Asn224 serves as a coordination point for K(+). Residues 224–229 (NAGKSS), 243–249 (TDIAGTT), and 268–271 (DTAG) each bind GTP. Mg(2+) is bound at residue Ser228. Residues Thr243, Ile245, and Thr248 each coordinate K(+). Thr249 serves as a coordination point for Mg(2+). Lys452 contacts (6S)-5-formyl-5,6,7,8-tetrahydrofolate.

The protein belongs to the TRAFAC class TrmE-Era-EngA-EngB-Septin-like GTPase superfamily. TrmE GTPase family. As to quaternary structure, homodimer. Heterotetramer of two MnmE and two MnmG subunits. The cofactor is K(+).

It localises to the cytoplasm. Its function is as follows. Exhibits a very high intrinsic GTPase hydrolysis rate. Involved in the addition of a carboxymethylaminomethyl (cmnm) group at the wobble position (U34) of certain tRNAs, forming tRNA-cmnm(5)s(2)U34. This is tRNA modification GTPase MnmE from Haemophilus influenzae (strain ATCC 51907 / DSM 11121 / KW20 / Rd).